A 278-amino-acid chain; its full sequence is MPIKIVTDSSITIEPGIARELDITIVPLSVTIDGTMYSDDDLKFEDFMVKMAASKNLPKTSQPPVGVFAEVYEKIAAEDDEIISIHLTEALSGTVEAARQGGMLSGRNVTVIDSDFTDQAQKFQVVEAARLAKAGASKEEILEKIKYIRENTELFIGFSTLENLVKGGRVSRMTGLFGSLLQVRVIGTLKDRELNTLLRGRGSKTFYKWLEELSDSISSSGRKIREIGISHAQGLEFSQKAKEVLQKFVEKPISILDTNTTIATHTGPGAWAIMIDYE.

In terms of domain architecture, DegV spans 3 to 277 (IKIVTDSSIT…PGAWAIMIDY (275 aa)). Hexadecanoate is bound by residues threonine 60 and serine 92.

Its function is as follows. May bind long-chain fatty acids, such as palmitate, and may play a role in lipid transport or fatty acid metabolism. This Lactococcus lactis subsp. lactis (strain IL1403) (Streptococcus lactis) protein is DegV domain-containing protein YejH (yejH).